The primary structure comprises 169 residues: uncharacterized protein (169 aa).

The HD domain maps to 18–130; sequence VVEHCLAVSE…VAHADNLIFG (113 aa).

This is an uncharacterized protein from Methanocaldococcus jannaschii (strain ATCC 43067 / DSM 2661 / JAL-1 / JCM 10045 / NBRC 100440) (Methanococcus jannaschii).